Consider the following 288-residue polypeptide: Pantothenate synthetase (288 aa).

Residue 30–37 coordinates ATP; the sequence is MGNLHAGH. His-37 serves as the catalytic Proton donor. Gln-61 is a (R)-pantoate binding site. Gln-61 lines the beta-alanine pocket. An ATP-binding site is contributed by 149–152; the sequence is GLKD. Residue Gln-155 participates in (R)-pantoate binding. ATP contacts are provided by residues Ile-178 and 186-189; that span reads LSSR.

The protein belongs to the pantothenate synthetase family. As to quaternary structure, homodimer.

It is found in the cytoplasm. It catalyses the reaction (R)-pantoate + beta-alanine + ATP = (R)-pantothenate + AMP + diphosphate + H(+). It participates in cofactor biosynthesis; (R)-pantothenate biosynthesis; (R)-pantothenate from (R)-pantoate and beta-alanine: step 1/1. In terms of biological role, catalyzes the condensation of pantoate with beta-alanine in an ATP-dependent reaction via a pantoyl-adenylate intermediate. The protein is Pantothenate synthetase of Colwellia psychrerythraea (strain 34H / ATCC BAA-681) (Vibrio psychroerythus).